We begin with the raw amino-acid sequence, 428 residues long: Putative zinc metalloprotease SA1105 (428 aa).

H21 contacts Zn(2+). The active site involves E22. Zn(2+) is bound at residue H25. The next 4 membrane-spanning stretches (helical) occupy residues 172–194 (FLTL…IGLA), 309–331 (GSTL…GFSF), 352–374 (IISL…LIPI), and 401–420 (TTII…LVTW). Positions 186-269 (ALVLFIGLAY…TKSVELTPKK (84 aa)) constitute a PDZ domain.

This sequence belongs to the peptidase M50B family. Zn(2+) is required as a cofactor.

It localises to the cell membrane. The polypeptide is Putative zinc metalloprotease SA1105 (Staphylococcus aureus (strain N315)).